The primary structure comprises 406 residues: Phosphorylase b kinase gamma catalytic chain, liver/testis isoform (406 aa).

In terms of domain architecture, Protein kinase spans 24–291 (YDPKDVIGRG…AEQALQHPFF (268 aa)). ATP-binding positions include 30 to 38 (IGRGVSSVV) and K53. The active-site Proton acceptor is the D153. Positions 306 to 330 (QRFRVAVWTVLAAGRVALSAHRIRP) are calmodulin-binding (domain-N). The interval 346–370 (VRRLIDNCAFRLYGHWVKKGEQQNR) is calmodulin-binding (domain-C).

It belongs to the protein kinase superfamily. CAMK Ser/Thr protein kinase family. Hexadecamer of 4 heterotetramers, each composed of alpha, beta, gamma, and delta subunits. Alpha (PHKA1 or PHKA2) and beta (PHKB) are regulatory subunits, gamma (PHKG1 or PHKG2) is the catalytic subunit, and delta is calmodulin.

It carries out the reaction 2 ATP + phosphorylase b = 2 ADP + phosphorylase a.. Functionally, catalytic subunit of the phosphorylase b kinase (PHK), which mediates the neural and hormonal regulation of glycogen breakdown (glycogenolysis) by phosphorylating and thereby activating glycogen phosphorylase. May regulate glycogeneolysis in the testis. In vitro, phosphorylates PYGM. The polypeptide is Phosphorylase b kinase gamma catalytic chain, liver/testis isoform (PHKG2) (Bos taurus (Bovine)).